The chain runs to 239 residues: MLTRKQQELLLFIHERMKESGVPPSFDEMKDALDLASKSGIHRLITALEERGFIRRLPNRARALEVIKLPEAYNPSLQPRRGFSPSVIEGSLGKPQPVAAPAAPKPVADNGNSISVPVMGRIAAGVPISAIQNNTHDIVVPADMLGSGEHYALEVKGDSMIDAGIFDGDTVIIRNGSTASPGDIVVALVDDEEATLKRFRRKGASIALEAANPAYETRIFGPDRVKVQGKLVGLIRRYH.

Positions 26–46 (FDEMKDALDLASKSGIHRLIT) form a DNA-binding region, H-T-H motif. Active-site for autocatalytic cleavage activity residues include serine 159 and lysine 197.

It belongs to the peptidase S24 family. In terms of assembly, homodimer.

The enzyme catalyses Hydrolysis of Ala-|-Gly bond in repressor LexA.. Its function is as follows. Represses a number of genes involved in the response to DNA damage (SOS response), including recA and lexA. In the presence of single-stranded DNA, RecA interacts with LexA causing an autocatalytic cleavage which disrupts the DNA-binding part of LexA, leading to derepression of the SOS regulon and eventually DNA repair. In Rhizobium etli (strain ATCC 51251 / DSM 11541 / JCM 21823 / NBRC 15573 / CFN 42), this protein is LexA repressor.